The chain runs to 88 residues: Elongation factor 1-beta (88 aa).

This sequence belongs to the EF-1-beta/EF-1-delta family.

In terms of biological role, promotes the exchange of GDP for GTP in EF-1-alpha/GDP, thus allowing the regeneration of EF-1-alpha/GTP that could then be used to form the ternary complex EF-1-alpha/GTP/AAtRNA. The sequence is that of Elongation factor 1-beta from Natronomonas pharaonis (strain ATCC 35678 / DSM 2160 / CIP 103997 / JCM 8858 / NBRC 14720 / NCIMB 2260 / Gabara) (Halobacterium pharaonis).